A 130-amino-acid chain; its full sequence is Small ribosomal subunit protein uS9 (130 aa).

Belongs to the universal ribosomal protein uS9 family.

This Exiguobacterium sp. (strain ATCC BAA-1283 / AT1b) protein is Small ribosomal subunit protein uS9.